The chain runs to 97 residues: Small nuclear ribonucleoprotein Sm D3 (97 aa).

Residues 3–75 (LCIKLLHETQ…IRFLIVPDML (73 aa)) form the Sm domain.

This sequence belongs to the snRNP core protein family. As to quaternary structure, belongs to the 40S cdc5-associated complex (or cwf complex), a spliceosome sub-complex reminiscent of a late-stage spliceosome composed of the U2, U5 and U6 snRNAs and at least brr2, cdc5, cwf2/prp3, cwf3/syf1, cwf4/syf3, cwf5/ecm2, spp42/cwf6, cwf7/spf27, cwf8, cwf9, cwf10, cwf11, cwf12, prp45/cwf13, cwf14, cwf15, cwf16, cwf17, cwf18, cwf19, cwf20, cwf21, cwf22, cwf23, cwf24, cwf25, cwf26, cyp7/cwf27, cwf28, cwf29/ist3, lea1, msl1, prp5/cwf1, prp10, prp12/sap130, prp17, prp22, sap61, sap62, sap114, sap145, slu7, smb1, smd1, smd3, smf1, smg1 and syf2. Interacts with saf5; the interaction is direct.

The protein resides in the nucleus. The protein localises to the cytoplasm. Its subcellular location is the cytosol. Functionally, plays a role in pre-mRNA splicing as a core component of the spliceosomal U1, U2, U4 and U5 small nuclear ribonucleoproteins (snRNPs), the building blocks of the spliceosome. This Schizosaccharomyces pombe (strain 972 / ATCC 24843) (Fission yeast) protein is Small nuclear ribonucleoprotein Sm D3 (smd3).